The primary structure comprises 37 residues: Large ribosomal subunit protein bL36c (37 aa).

The protein belongs to the bacterial ribosomal protein bL36 family.

Its subcellular location is the plastid. The protein resides in the chloroplast. This is Large ribosomal subunit protein bL36c from Vitis vinifera (Grape).